A 1269-amino-acid polypeptide reads, in one-letter code: DNA-directed RNA polymerase subunit beta'' (1269 aa).

Cys226, Cys301, Cys308, and Cys311 together coordinate Zn(2+).

It belongs to the RNA polymerase beta' chain family. RpoC2 subfamily. As to quaternary structure, in plastids the minimal PEP RNA polymerase catalytic core is composed of four subunits: alpha, beta, beta', and beta''. When a (nuclear-encoded) sigma factor is associated with the core the holoenzyme is formed, which can initiate transcription. Requires Zn(2+) as cofactor.

Its subcellular location is the plastid. It is found in the chloroplast. The catalysed reaction is RNA(n) + a ribonucleoside 5'-triphosphate = RNA(n+1) + diphosphate. In terms of biological role, DNA-dependent RNA polymerase catalyzes the transcription of DNA into RNA using the four ribonucleoside triphosphates as substrates. This is DNA-directed RNA polymerase subunit beta'' from Cyanidium caldarium (Red alga).